The primary structure comprises 494 residues: UDP-N-acetylmuramoyl-L-alanyl-D-glutamate--L-lysine ligase (494 aa).

Ser30 serves as a coordination point for UDP-N-acetyl-alpha-D-muramoyl-L-alanyl-D-glutamate. 110 to 116 provides a ligand contact to ATP; that stretch reads GTNGKTS. UDP-N-acetyl-alpha-D-muramoyl-L-alanyl-D-glutamate contacts are provided by residues 152–153, Ser179, and Arg187; that span reads TT. Lys219 bears the N6-carboxylysine mark. The short motif at 406–409 is the L-lysine recognition motif element; that stretch reads DNPA.

Belongs to the MurCDEF family. MurE subfamily. Post-translationally, carboxylation is probably crucial for Mg(2+) binding and, consequently, for the gamma-phosphate positioning of ATP.

It localises to the cytoplasm. The catalysed reaction is UDP-N-acetyl-alpha-D-muramoyl-L-alanyl-D-glutamate + L-lysine + ATP = UDP-N-acetyl-alpha-D-muramoyl-L-alanyl-gamma-D-glutamyl-L-lysine + ADP + phosphate + H(+). The protein operates within cell wall biogenesis; peptidoglycan biosynthesis. Functionally, catalyzes the addition of L-lysine to the nucleotide precursor UDP-N-acetylmuramoyl-L-alanyl-D-glutamate (UMAG) in the biosynthesis of bacterial cell-wall peptidoglycan. This chain is UDP-N-acetylmuramoyl-L-alanyl-D-glutamate--L-lysine ligase, found in Staphylococcus aureus (strain MW2).